The sequence spans 201 residues: Oligoribonuclease (201 aa).

An Exonuclease domain is found at 20 to 183 (LVWLDMEMTG…ADIHESIDEL (164 aa)). Y141 is an active-site residue.

This sequence belongs to the oligoribonuclease family.

It localises to the cytoplasm. 3'-to-5' exoribonuclease specific for small oligoribonucleotides. This Burkholderia mallei (strain NCTC 10229) protein is Oligoribonuclease.